A 386-amino-acid chain; its full sequence is MIISAASDYRAAAEARLPPFLFHYMDGGAYAEHTLRRNVSDLADIALRQRVLRNMSDLSLSTELFGETLAMPVALAPVGLTGMYARRGEVQAARAAAARGIPFTLSTVSVCPIEEVAPAIDRPMWFQLYVLKDRGFMRNALERAKAAGVTTLVFTVDMPTPGARYRDAHSGMSGPNAPLRRMLQAMTHPRWAWDVGLLGKPHDLGNISTYRGSPTGLQDYIGWLAANFDPSISWKDLEWIREFWTGPMVIKGILDPEDARDAVRFGADGIVVSNHGGRQLDGVLSSARALPAIADAVKGELKILADSGIRSGLDVVRMLALGADAVLLGRAFVYALAAGGQAGVENLLTLIEREMRVAMILTGTHSVAEISGDALSRVTREAAVVP.

Residues 1-380 (MIISAASDYR…SGDALSRVTR (380 aa)) enclose the FMN hydroxy acid dehydrogenase domain. Position 24 (Tyr-24) interacts with substrate. Residues Ser-106 and Gln-127 each contribute to the FMN site. A substrate-binding site is contributed by Tyr-129. Residue Thr-155 participates in FMN binding. Residue Arg-164 coordinates substrate. Lys-251 is a binding site for FMN. His-275 serves as the catalytic Proton acceptor. Arg-278 lines the substrate pocket. 306-330 (DSGIRSGLDVVRMLALGADAVLLGR) provides a ligand contact to FMN.

It belongs to the FMN-dependent alpha-hydroxy acid dehydrogenase family. FMN is required as a cofactor.

The protein resides in the cell inner membrane. The enzyme catalyses (S)-lactate + A = pyruvate + AH2. Functionally, catalyzes the conversion of L-lactate to pyruvate. Is coupled to the respiratory chain. The sequence is that of L-lactate dehydrogenase from Xanthomonas campestris pv. campestris (strain B100).